Consider the following 232-residue polypeptide: Octanoyltransferase (232 aa).

The region spanning 44 to 219 (EHTADEVWVV…QLARQFGLVL (176 aa)) is the BPL/LPL catalytic domain. Residues 83–90 (RGGQVTYH), 150–152 (ALG), and 163–165 (GLS) each bind substrate. Cys-181 serves as the catalytic Acyl-thioester intermediate.

This sequence belongs to the LipB family.

It localises to the cytoplasm. It carries out the reaction octanoyl-[ACP] + L-lysyl-[protein] = N(6)-octanoyl-L-lysyl-[protein] + holo-[ACP] + H(+). The protein operates within protein modification; protein lipoylation via endogenous pathway; protein N(6)-(lipoyl)lysine from octanoyl-[acyl-carrier-protein]: step 1/2. In terms of biological role, catalyzes the transfer of endogenously produced octanoic acid from octanoyl-acyl-carrier-protein onto the lipoyl domains of lipoate-dependent enzymes. Lipoyl-ACP can also act as a substrate although octanoyl-ACP is likely to be the physiological substrate. This chain is Octanoyltransferase, found in Xanthomonas euvesicatoria pv. vesicatoria (strain 85-10) (Xanthomonas campestris pv. vesicatoria).